The sequence spans 380 residues: MAPNLRKSHPLLKMINNSLIDLPTPSNISAWWNFGSLLGICLMTQILTGLLLAMHYTADTTLAFSSVAHTCRNVQYGWLIRNLHANGASFFFICIYLHIGRGFYYGSYLYKETWNTGIILLLTLMATAFVGYVLPWGQMSFWGATVITNLFSAIPYIGQTLVEWAWGGFSVDNPTLTRFFALHFLLPFAIAGLTLIHLTFLHESGSNNPLGIVSNCDKIPFHPYFTLKDILGFTLMVLPLTSLALFSPNLLGDPENFTPANPLVTPPHIKPEWYFLFAYAILRSIPNKLGGVLALAASVLVLFLSPFLHKAKQRTMTFRPLSQLLFWILVTNLFILTWVGSQPVEHPFIIIGQLASITYFTILLILFPIIGTLENKMLNF.

4 helical membrane-spanning segments follow: residues phenylalanine 34–methionine 54, tryptophan 78–isoleucine 99, tryptophan 114–leucine 134, and phenylalanine 179–threonine 199. Residues histidine 84 and histidine 98 each contribute to the heme b site. 2 residues coordinate heme b: histidine 183 and histidine 197. Residue histidine 202 participates in a ubiquinone binding. Helical transmembrane passes span leucine 227 to serine 247, leucine 289 to histidine 309, leucine 321 to serine 341, and phenylalanine 348 to proline 368.

The protein belongs to the cytochrome b family. As to quaternary structure, the cytochrome bc1 complex contains 11 subunits: 3 respiratory subunits (MT-CYB, CYC1 and UQCRFS1), 2 core proteins (UQCRC1 and UQCRC2) and 6 low-molecular weight proteins (UQCRH/QCR6, UQCRB/QCR7, UQCRQ/QCR8, UQCR10/QCR9, UQCR11/QCR10 and a cleavage product of UQCRFS1). This cytochrome bc1 complex then forms a dimer. Heme b serves as cofactor.

The protein resides in the mitochondrion inner membrane. Its function is as follows. Component of the ubiquinol-cytochrome c reductase complex (complex III or cytochrome b-c1 complex) that is part of the mitochondrial respiratory chain. The b-c1 complex mediates electron transfer from ubiquinol to cytochrome c. Contributes to the generation of a proton gradient across the mitochondrial membrane that is then used for ATP synthesis. In Macronectes halli (Hall's giant petrel), this protein is Cytochrome b (MT-CYB).